The primary structure comprises 86 residues: Protein Tat (86 aa).

Residues 1–21 are disordered; the sequence is MDPVDPNIEPWNHPGSQPKTA. Residues 1–24 form an interaction with human CREBBP region; it reads MDPVDPNIEPWNHPGSQPKTACNR. Residues 1–48 are transactivation; that stretch reads MDPVDPNIEPWNHPGSQPKTACNRCHCKKCCYHCQVCFITKGLGISYG. Positions 22, 25, and 27 each coordinate Zn(2+). Residues 22-37 form a cysteine-rich region; that stretch reads CNRCHCKKCCYHCQVC. N6-acetyllysine; by host PCAF is present on Lys28. Zn(2+) contacts are provided by Cys30, His33, Cys34, and Cys37. Residues 38–48 form a core region; the sequence is FITKGLGISYG. The disordered stretch occupies residues 47–86; sequence YGRKKRRQRRRPSQGGQTHQDPIPKQPSSQPRGDPTGPKE. The span at 48 to 58 shows a compositional bias: basic residues; that stretch reads GRKKRRQRRRP. The short motif at 49–57 is the Nuclear localization signal, RNA-binding (TAR), and protein transduction element; that stretch reads RKKRRQRRR. The segment at 49 to 86 is interaction with the host capping enzyme RNGTT; that stretch reads RKKRRQRRRPSQGGQTHQDPIPKQPSSQPRGDPTGPKE. 2 positions are modified to N6-acetyllysine; by host EP300 and GCN5L2: Lys50 and Lys51. An asymmetric dimethylarginine; by host PRMT6 mark is found at Arg52 and Arg53. Residues 60–77 are compositionally biased toward polar residues; sequence QGGQTHQDPIPKQPSSQP. A Glycyl lysine isopeptide (Lys-Gly) (interchain with G-Cter in ubiquitin) cross-link involves residue Lys71. Positions 78-80 match the Cell attachment site motif; it reads RGD.

Belongs to the lentiviruses Tat family. Interacts with host CCNT1. Associates with the P-TEFb complex composed at least of Tat, P-TEFb (CDK9 and CCNT1), TAR RNA, RNA Pol II. Recruits the HATs CREBBP, TAF1/TFIID, EP300, PCAF and GCN5L2. Interacts with host KAT5/Tip60; this interaction targets the latter to degradation. Interacts with the host deacetylase SIRT1. Interacts with host capping enzyme RNGTT; this interaction stimulates RNGTT. Binds to host KDR, and to the host integrins ITGAV/ITGB3 and ITGA5/ITGB1. Interacts with host KPNB1/importin beta-1 without previous binding to KPNA1/importin alpha-1. Interacts with EIF2AK2. Interacts with host nucleosome assembly protein NAP1L1; this interaction may be required for the transport of Tat within the nucleus, since the two proteins interact at the nuclear rim. Interacts with host C1QBP/SF2P32; this interaction involves lysine-acetylated Tat. Interacts with the host chemokine receptors CCR2, CCR3 and CXCR4. Interacts with host DPP4/CD26; this interaction may trigger an anti-proliferative effect. Interacts with host LDLR. Interacts with the host extracellular matrix metalloproteinase MMP1. Interacts with host PRMT6; this interaction mediates Tat's methylation. Interacts with, and is ubiquitinated by MDM2/Hdm2. Interacts with host PSMC3 and HTATIP2. Interacts with STAB1; this interaction may overcome SATB1-mediated repression of IL2 and IL2RA (interleukin) in T cells by binding to the same domain than HDAC1. Interacts (when acetylated) with human CDK13, thereby increasing HIV-1 mRNA splicing and promoting the production of the doubly spliced HIV-1 protein Nef. Interacts with host TBP; this interaction modulates the activity of transcriptional pre-initiation complex. Interacts with host RELA. Interacts with host PLSCR1; this interaction negatively regulates Tat transactivation activity by altering its subcellular distribution. Asymmetrical arginine methylation by host PRMT6 seems to diminish the transactivation capacity of Tat and affects the interaction with host CCNT1. In terms of processing, acetylation by EP300, CREBBP, GCN5L2/GCN5 and PCAF regulates the transactivation activity of Tat. EP300-mediated acetylation of Lys-50 promotes dissociation of Tat from the TAR RNA through the competitive binding to PCAF's bromodomain. In addition, the non-acetylated Tat's N-terminus can also interact with PCAF. PCAF-mediated acetylation of Lys-28 enhances Tat's binding to CCNT1. Lys-50 is deacetylated by SIRT1. Post-translationally, polyubiquitination by host MDM2 does not target Tat to degradation, but activates its transactivation function and fosters interaction with CCNT1 and TAR RNA. Phosphorylated by EIF2AK2 on serine and threonine residues adjacent to the basic region important for TAR RNA binding and function. Phosphorylation of Tat by EIF2AK2 is dependent on the prior activation of EIF2AK2 by dsRNA.

Its subcellular location is the host nucleus. The protein localises to the host nucleolus. It localises to the host cytoplasm. The protein resides in the secreted. Its function is as follows. Transcriptional activator that increases RNA Pol II processivity, thereby increasing the level of full-length viral transcripts. Recognizes a hairpin structure at the 5'-LTR of the nascent viral mRNAs referred to as the transactivation responsive RNA element (TAR) and recruits the cyclin T1-CDK9 complex (P-TEFb complex) that will in turn hyperphosphorylate the RNA polymerase II to allow efficient elongation. The CDK9 component of P-TEFb and other Tat-activated kinases hyperphosphorylate the C-terminus of RNA Pol II that becomes stabilized and much more processive. Other factors such as HTATSF1/Tat-SF1, SUPT5H/SPT5, and HTATIP2 are also important for Tat's function. Besides its effect on RNA Pol II processivity, Tat induces chromatin remodeling of proviral genes by recruiting the histone acetyltransferases (HATs) CREBBP, EP300 and PCAF to the chromatin. This also contributes to the increase in proviral transcription rate, especially when the provirus integrates in transcriptionally silent region of the host genome. To ensure maximal activation of the LTR, Tat mediates nuclear translocation of NF-kappa-B by interacting with host RELA. Through its interaction with host TBP, Tat may also modulate transcription initiation. Tat can reactivate a latently infected cell by penetrating in it and transactivating its LTR promoter. In the cytoplasm, Tat is thought to act as a translational activator of HIV-1 mRNAs. In terms of biological role, extracellular circulating Tat can be endocytosed by surrounding uninfected cells via the binding to several surface receptors such as CD26, CXCR4, heparan sulfate proteoglycans (HSPG) or LDLR. Neurons are rarely infected, but they internalize Tat via their LDLR. Through its interaction with nuclear HATs, Tat is potentially able to control the acetylation-dependent cellular gene expression. Modulates the expression of many cellular genes involved in cell survival, proliferation or in coding for cytokines or cytokine receptors. Tat plays a role in T-cell and neurons apoptosis. Tat induced neurotoxicity and apoptosis probably contribute to neuroAIDS. Circulating Tat also acts as a chemokine-like and/or growth factor-like molecule that binds to specific receptors on the surface of the cells, affecting many cellular pathways. In the vascular system, Tat binds to ITGAV/ITGB3 and ITGA5/ITGB1 integrins dimers at the surface of endothelial cells and competes with bFGF for heparin-binding sites, leading to an excess of soluble bFGF. In Human immunodeficiency virus type 1 group M subtype D (isolate Z2/CDC-Z34) (HIV-1), this protein is Protein Tat.